The sequence spans 493 residues: Cysteine--tRNA ligase (493 aa).

Residue C29 participates in Zn(2+) binding. A 'HIGH' region motif is present at residues 31–41 (VTVYDLCHLGH). The interval 154-179 (KLSGRDPDDQQQGASGRTADGEESRK) is disordered. Zn(2+)-binding residues include C213, H238, and E242. Positions 270–274 (KMSKS) match the 'KMSKS' region motif. Residue K273 participates in ATP binding.

This sequence belongs to the class-I aminoacyl-tRNA synthetase family. Monomer. Zn(2+) serves as cofactor.

It is found in the cytoplasm. The catalysed reaction is tRNA(Cys) + L-cysteine + ATP = L-cysteinyl-tRNA(Cys) + AMP + diphosphate. The protein is Cysteine--tRNA ligase of Synechococcus sp. (strain CC9605).